A 61-amino-acid chain; its full sequence is MAQPKKKTSNAKRDQRRATWKRKARVQAEKALALGKSILSGNNTGFYYPQLEAEEEEQAEE.

Residues 1 to 10 (MAQPKKKTSN) show a composition bias toward basic residues. Residues 1–23 (MAQPKKKTSNAKRDQRRATWKRK) are disordered.

The protein belongs to the bacterial ribosomal protein bL32 family.

This is Large ribosomal subunit protein bL32 from Gloeobacter violaceus (strain ATCC 29082 / PCC 7421).